The following is a 314-amino-acid chain: Acetaldehyde dehydrogenase 1 (314 aa).

16–19 (SGNI) is an NAD(+) binding site. Residue Cys134 is the Acyl-thioester intermediate of the active site. Residues 165–173 (SAGPGTRAN) and Asn292 contribute to the NAD(+) site.

It belongs to the acetaldehyde dehydrogenase family.

It catalyses the reaction acetaldehyde + NAD(+) + CoA = acetyl-CoA + NADH + H(+). The polypeptide is Acetaldehyde dehydrogenase 1 (mhpF) (Cupriavidus necator (strain ATCC 17699 / DSM 428 / KCTC 22496 / NCIMB 10442 / H16 / Stanier 337) (Ralstonia eutropha)).